Consider the following 203-residue polypeptide: N-(5'-phosphoribosyl)anthranilate isomerase (203 aa).

The protein belongs to the TrpF family.

The catalysed reaction is N-(5-phospho-beta-D-ribosyl)anthranilate = 1-(2-carboxyphenylamino)-1-deoxy-D-ribulose 5-phosphate. It participates in amino-acid biosynthesis; L-tryptophan biosynthesis; L-tryptophan from chorismate: step 3/5. This Geotalea uraniireducens (strain Rf4) (Geobacter uraniireducens) protein is N-(5'-phosphoribosyl)anthranilate isomerase.